The following is a 485-amino-acid chain: Glutamate--tRNA ligase (485 aa).

The 'HIGH' region motif lies at 11–21 (PSPTGLLHIGN). The 'KMSKS' region motif lies at 255–259 (KLSKR). Lys258 is a binding site for ATP.

It belongs to the class-I aminoacyl-tRNA synthetase family. Glutamate--tRNA ligase type 1 subfamily. Monomer.

It is found in the cytoplasm. The enzyme catalyses tRNA(Glu) + L-glutamate + ATP = L-glutamyl-tRNA(Glu) + AMP + diphosphate. Catalyzes the attachment of glutamate to tRNA(Glu) in a two-step reaction: glutamate is first activated by ATP to form Glu-AMP and then transferred to the acceptor end of tRNA(Glu). This chain is Glutamate--tRNA ligase, found in Streptococcus mutans serotype c (strain ATCC 700610 / UA159).